The chain runs to 414 residues: Mannan endo-1,4-beta-mannosidase 3 (414 aa).

Residues 1 to 19 form the signal peptide; sequence MKCLCFVVLLAILIAQNSS. N-linked (GlcNAc...) asparagine glycans are attached at residues N17 and N75. W87 contacts substrate. N133 and N153 each carry an N-linked (GlcNAc...) asparagine glycan. N202 is a binding site for substrate. The Proton donor role is filled by E203. Substrate is bound at residue Y283. E323 acts as the Nucleophile in catalysis. An N-linked (GlcNAc...) asparagine glycan is attached at N343. Residue W365 coordinates substrate. N-linked (GlcNAc...) asparagine glycosylation occurs at N386.

It belongs to the glycosyl hydrolase 5 (cellulase A) family. Expressed in leaves, flowers, siliques and seeds.

It is found in the secreted. The catalysed reaction is Random hydrolysis of (1-&gt;4)-beta-D-mannosidic linkages in mannans, galactomannans and glucomannans.. This is Mannan endo-1,4-beta-mannosidase 3 (MAN3) from Arabidopsis thaliana (Mouse-ear cress).